Here is a 614-residue protein sequence, read N- to C-terminus: Chaperone protein DnaK (614 aa).

The residue at position 175 (T175) is a Phosphothreonine; by autocatalysis. The segment at 577–614 is disordered; that stretch reads QAGGAEGAADPNAAAGGAQSAPHDDNVVDADFKVDEDK. The segment covering 583–597 has biased composition (low complexity); sequence GAADPNAAAGGAQSA. Residues 598–614 are compositionally biased toward basic and acidic residues; the sequence is PHDDNVVDADFKVDEDK.

This sequence belongs to the heat shock protein 70 family.

In terms of biological role, acts as a chaperone. This Clostridium beijerinckii (strain ATCC 51743 / NCIMB 8052) (Clostridium acetobutylicum) protein is Chaperone protein DnaK.